The chain runs to 555 residues: Sulfite reductase [ferredoxin] 1 (555 aa).

Residues 69–161 (YTQREQGYDG…SVGLQTTEAC (93 aa)) constitute a cross-link (3'-(S-cysteinyl)-tyrosine (Tyr-Cys)). [4Fe-4S] cluster-binding residues include cysteine 417, cysteine 423, cysteine 463, and cysteine 467. Siroheme is bound at residue cysteine 467.

Belongs to the nitrite and sulfite reductase 4Fe-4S domain family. Monomer. The cofactor is siroheme. It depends on [4Fe-4S] cluster as a cofactor.

It carries out the reaction hydrogen sulfide + 6 oxidized [2Fe-2S]-[ferredoxin] + 3 H2O = sulfite + 6 reduced [2Fe-2S]-[ferredoxin] + 7 H(+). Its function is as follows. Catalyzes the reduction of sulfite to sulfide, a step in the biosynthesis of sulfur-containing amino acids and cofactors. This Mycolicibacterium paratuberculosis (strain ATCC BAA-968 / K-10) (Mycobacterium paratuberculosis) protein is Sulfite reductase [ferredoxin] 1 (sir1).